A 735-amino-acid polypeptide reads, in one-letter code: Phosphoribosylformylglycinamidine synthase subunit PurL (735 aa).

His49 is an active-site residue. Tyr52 and Lys91 together coordinate ATP. Glu93 is a binding site for Mg(2+). Substrate-binding positions include 94–97 (SHNH) and Arg116. His95 (proton acceptor) is an active-site residue. Asp117 provides a ligand contact to Mg(2+). Gln240 lines the substrate pocket. Asp268 is a binding site for Mg(2+). Substrate is bound at residue 312–314 (ESQ). The ATP site is built by Asp493 and Gly530. Residue Asn531 coordinates Mg(2+). Residue Ser533 coordinates substrate.

The protein belongs to the FGAMS family. Monomer. Part of the FGAM synthase complex composed of 1 PurL, 1 PurQ and 2 PurS subunits.

It localises to the cytoplasm. It carries out the reaction N(2)-formyl-N(1)-(5-phospho-beta-D-ribosyl)glycinamide + L-glutamine + ATP + H2O = 2-formamido-N(1)-(5-O-phospho-beta-D-ribosyl)acetamidine + L-glutamate + ADP + phosphate + H(+). It functions in the pathway purine metabolism; IMP biosynthesis via de novo pathway; 5-amino-1-(5-phospho-D-ribosyl)imidazole from N(2)-formyl-N(1)-(5-phospho-D-ribosyl)glycinamide: step 1/2. Part of the phosphoribosylformylglycinamidine synthase complex involved in the purines biosynthetic pathway. Catalyzes the ATP-dependent conversion of formylglycinamide ribonucleotide (FGAR) and glutamine to yield formylglycinamidine ribonucleotide (FGAM) and glutamate. The FGAM synthase complex is composed of three subunits. PurQ produces an ammonia molecule by converting glutamine to glutamate. PurL transfers the ammonia molecule to FGAR to form FGAM in an ATP-dependent manner. PurS interacts with PurQ and PurL and is thought to assist in the transfer of the ammonia molecule from PurQ to PurL. The protein is Phosphoribosylformylglycinamidine synthase subunit PurL of Azorhizobium caulinodans (strain ATCC 43989 / DSM 5975 / JCM 20966 / LMG 6465 / NBRC 14845 / NCIMB 13405 / ORS 571).